Consider the following 190-residue polypeptide: Large ribosomal subunit protein uL5 (190 aa).

This sequence belongs to the universal ribosomal protein uL5 family. In terms of assembly, part of the 50S ribosomal subunit; contacts the 5S rRNA and probably tRNA. Forms a bridge to the 30S subunit in the 70S ribosome.

Its function is as follows. This is one of the proteins that bind and probably mediate the attachment of the 5S RNA into the large ribosomal subunit, where it forms part of the central protuberance. In the 70S ribosome it contacts protein S13 of the 30S subunit (bridge B1b), connecting the 2 subunits; this bridge is implicated in subunit movement. May contact the P site tRNA; the 5S rRNA and some of its associated proteins might help stabilize positioning of ribosome-bound tRNAs. The sequence is that of Large ribosomal subunit protein uL5 from Methanocaldococcus jannaschii (strain ATCC 43067 / DSM 2661 / JAL-1 / JCM 10045 / NBRC 100440) (Methanococcus jannaschii).